A 489-amino-acid chain; its full sequence is Protein LMBR1L (489 aa).

The Extracellular segment spans residues 1–21; that stretch reads MEAPDYEVLSVREQLFHERIR. Residues 1 to 59 form an interaction with LGB region; it reads MEAPDYEVLSVREQLFHERIRECIISTLLFATLYILCHIFLTRFKKPAEFTTVDDEDAT. Residues 1–76 form an LCN1-binding region; that stretch reads MEAPDYEVLS…LCTFTLAIAL (76 aa). A helical membrane pass occupies residues 22-42; sequence ECIISTLLFATLYILCHIFLT. Residues 43–66 lie on the Cytoplasmic side of the membrane; it reads RFKKPAEFTTVDDEDATVNKIALE. A helical transmembrane segment spans residues 67–87; the sequence is LCTFTLAIALGAVLLLPFSII. Over 88–114 the chain is Extracellular; that stretch reads SNEVLLSLPRNYYIQWLNGSLIHGLWN. A helical transmembrane segment spans residues 115–135; the sequence is LVFLFSNLSLIFLMPFAYFFT. At 136–154 the chain is on the cytoplasmic side; sequence ESEGFAGSRKGVLGRVYET. The helical transmembrane segment at 155 to 175 threads the bilayer; sequence VVMLMLLTLLVLGMVWVASAI. Over 176 to 196 the chain is Extracellular; that stretch reads VDKNKANRESLYDFWEYYLPY. Residues 197–217 form a helical membrane-spanning segment; that stretch reads LYSCISFLGVLLLLVCTPLGL. Topologically, residues 218 to 305 are cytoplasmic; sequence ARMFSVTGKL…NLGYPLAMLC (88 aa). The chain crosses the membrane as a helical span at residues 306–326; that stretch reads LLVLTGLSVLIVAIHILELLI. The Extracellular portion of the chain corresponds to 327–350; the sequence is DEAAMPRGMQGTSLGQVSFSKLGS. Residues 351–371 traverse the membrane as a helical segment; the sequence is FGAVIQVVLIFYLMVSSVVGF. Residues 372 to 388 are Cytoplasmic-facing; that stretch reads YSSPLFRSLRPRWHDTA. The helical transmembrane segment at 389 to 409 threads the bilayer; sequence MTQIIGNCVCLLVLSSALPVF. Residues 410–431 lie on the Extracellular side of the membrane; it reads SRTLGLTRFDLLGDFGRFNWLG. A helical transmembrane segment spans residues 432–452; sequence NFYIVFLYNAAFAGLTTLCLV. Over 453-489 the chain is Cytoplasmic; sequence KTFTAAVRAELIRAFGLDRLPLPVSGFPQASRKTQHQ.

Belongs to the LIMR family. As to quaternary structure, dimer. Can also form higher oligomers. Interacts with LCN1; this interaction mediates the endocytosis of LCN1. Interacts with UBAC2, FAF2, VCP, AMFR, ZNRF3, CTNNB1, LRP6, GSK3A and GSK3B. Interacts with DVL2 and RNF43. Interaction with SCGB1A1 has been observed in PubMed:16423471, but not in PubMed:23964685. Interaction with LGB which mediates the endocytosis of LGB has been observed in PubMed:17991420, but not in PubMed:23964685. As to expression, expressed in testis, pituitary gland, adrenal gland, trachea, placenta, thymus, cerebellum, stomach, mammary gland, spinal cord. A weaker expression is detected in colon, pancreas, and prostate.

Its subcellular location is the cell membrane. It is found in the endoplasmic reticulum membrane. Its function is as follows. Plays an essential role in lymphocyte development by negatively regulating the canonical Wnt signaling pathway. In association with UBAC2 and E3 ubiquitin-protein ligase AMFR, promotes the ubiquitin-mediated degradation of CTNNB1 and Wnt receptors FZD6 and LRP6. LMBR1L stabilizes the beta-catenin destruction complex that is required for regulating CTNNB1 levels. Acts as a LCN1 receptor and can mediate its endocytosis. This Homo sapiens (Human) protein is Protein LMBR1L (LMBR1L).